The following is a 274-amino-acid chain: Protein bax (274 aa).

Positions 32 to 64 (TTASQKSHLTKASNKQVSSKQEYSRNSAKSSSL) are enriched in polar residues. Residues 32 to 74 (TTASQKSHLTKASNKQVSSKQEYSRNSAKSSSLPDLRKYPSGT) form a disordered region. 247–254 (GYSTKGKS) is an ATP binding site.

In Escherichia coli (strain K12), this protein is Protein bax (bax).